A 731-amino-acid chain; its full sequence is Gelsolin (731 aa).

Residues Val2–Phe125 are actin-severing. The Gelsolin-like 1 repeat unit spans residues Phe25–Leu107. Position 35 is a phosphotyrosine (Tyr35). Positions 41, 42, 73, 85, 90, and 92 each coordinate Ca(2+). An actin-actin interfilament contact point region spans residues Asp72–Gly75. A 1,2-diacyl-sn-glycero-3-phospho-(1D-myo-inositol-4,5-bisphosphate) is bound at residue Lys111–Lys118. Val121 is a binding site for Ca(2+). Arg137–Arg145 serves as a coordination point for a 1,2-diacyl-sn-glycero-3-phospho-(1D-myo-inositol-4,5-bisphosphate). A Gelsolin-like 2 repeat occupies Val147 to Met219. Ca(2+) is bound by residues Gly162 and Asp163. A disulfide bridge connects residues Cys164 and Cys177. Glu185 is a Ca(2+) binding site. The span at Arg197–Glu211 shows a compositional bias: basic and acidic residues. The segment at Arg197–Pro216 is disordered. Residues Asp235, Glu278, Asp279, and Glu303 each coordinate Ca(2+). Residues Asp266–Phe338 form a Gelsolin-like 3 repeat. Phosphotyrosine is present on residues Tyr358 and Tyr414. Residues Ala383–Ala731 are actin-binding, Ca-sensitive. One copy of the Gelsolin-like 4 repeat lies at Ser404 to Met485. Ca(2+) is bound by residues Gly420, Asp421, Glu451, Asp463, Gly468, Pro470, and Thr500. One copy of the Gelsolin-like 5 repeat lies at Ala527 to Trp591. At Lys533 the chain carries N6-acetyllysine. Ca(2+)-binding residues include Asn540 and Asp541. Tyr552 is subject to Phosphotyrosine. Glu563 is a binding site for Ca(2+). Tyr600 carries the post-translational modification Phosphotyrosine. A Gelsolin-like 6 repeat occupies Ile630 to Phe705. Ca(2+) contacts are provided by Asp645, Asp646, and Glu668. Thr691 is subject to Phosphothreonine.

Belongs to the villin/gelsolin family. In terms of assembly, binds to actin and to fibronectin. Identified in a complex composed of ACTA1, COBL, GSN and TMSB4X. Interacts with the inactive form of EIF2AK2/PKR. Interacts with FLII.

The protein localises to the cytoplasm. It is found in the cytoskeleton. Functionally, calcium-regulated, actin-modulating protein that binds to the plus (or barbed) ends of actin monomers or filaments, preventing monomer exchange (end-blocking or capping). It can promote the assembly of monomers into filaments (nucleation) as well as sever filaments already formed. Plays a role in ciliogenesis. In Bos taurus (Bovine), this protein is Gelsolin (GSN).